Reading from the N-terminus, the 468-residue chain is uncharacterized protein (468 aa).

The TRAM domain occupies 3–61 (TFANGMTLDVTVDALAPGGKAVCRHEGRVIFVDRGLPGQQLHVRLTTVRKRFAEAECLA). [4Fe-4S] cluster-binding residues include Cys-74, Cys-80, Cys-83, and Cys-162. The S-adenosyl-L-methionine site is built by Gln-288, Tyr-317, Glu-338, and Asp-389. Cys-416 functions as the Nucleophile in the catalytic mechanism.

Belongs to the class I-like SAM-binding methyltransferase superfamily. RNA M5U methyltransferase family.

This is an uncharacterized protein from Nitratidesulfovibrio vulgaris (strain ATCC 29579 / DSM 644 / CCUG 34227 / NCIMB 8303 / VKM B-1760 / Hildenborough) (Desulfovibrio vulgaris).